The chain runs to 652 residues: Potassium voltage-gated channel subfamily KQT member 1 (652 aa).

Residues 1–110 (MSSEQPAWTF…YNFLERPTGW (110 aa)) are Cytoplasmic-facing. The helical transmembrane segment at 111–132 (KCFVYHFTVFLIVLICLIFSVL) threads the bilayer. Residues 133 to 143 (STIQQYNNLAT) lie on the Extracellular side of the membrane. The chain crosses the membrane as a helical span at residues 144–166 (ETLFWMEIVLVVFFGAEYVVRLW). At 167 to 182 (SAGCRSKYVGVWGRLR) the chain is on the cytoplasmic side. A helical transmembrane segment spans residues 183-208 (FARKPISVIDLIVVVASVIVLCVGSN). Topologically, residues 209 to 216 (GQVFATSA) are extracellular. The helical; Voltage-sensor transmembrane segment at 217–232 (IRGIRFLQILRMLHVD) threads the bilayer. The tract at residues 228–236 (MLHVDRQGG) is interaction with KCNE3. The Cytoplasmic segment spans residues 233–250 (RQGGTWRLLGSVVFIHRQ). Q234 serves as a coordination point for a 1,2-diacyl-sn-glycero-3-phospho-(1D-myo-inositol-4,5-bisphosphate). A helical membrane pass occupies residues 251-273 (ELITTLYIGFLGLIFSSYFVYLA). Residues 274 to 289 (EKDAIDSSGEYQFGSY) are Extracellular-facing. Positions 290-310 (ADALWWGVVTVTTIGYGDKVP) form an intramembrane region, pore-forming. At 311 to 312 (QT) the chain is on the extracellular side. Residues 313–338 (WIGKTIASCFSVFAISFFALPAGILG) traverse the membrane as a helical segment. At 339-652 (SGFALKVQQK…VPRMTQDNIS (314 aa)) the chain is on the cytoplasmic side. The tract at residues 360 to 372 (AAASLIQTAWRCY) is interaction with CALM. A disordered region spans residues 393 to 419 (HHLMSPSPKPKKSAMVKKKKIRTERDE). The segment covering 401-414 (KPKKSAMVKKKKIR) has biased composition (basic residues). The tract at residues 504-518 (KVIRRMQYFVAKKKF) is interaction with CALM; calcium-dependent. The interaction with KCNE1 C-terminus stretch occupies residues 524–561 (PYDVRDVIEQYSQGHLNLMVRIKELQRRLDQSLGKPSL). The tract at residues 577 to 605 (IGSRLNRVEDKVTQMDHKLNLITDMLHHL) is interaction with AKAP9. The interval 578-609 (GSRLNRVEDKVTQMDHKLNLITDMLHHLLTNQ) is C-terminal assembly domain (tetramerization). Positions 609 to 652 (QQGSQSIRTPHRSNSLNSENHPSRNTLPTYEQLNVPRMTQDNIS) are disordered.

Belongs to the potassium channel family. KQT (TC 1.A.1.15) subfamily. Kv7.1/KCNQ1 sub-subfamily. As to quaternary structure, tetramer. Heterotetramer with KCNE1; targets to the membrane raft. Interacts (via C-terminus) with CALM; forms a heterotetramer in a calcium-independent manner. Interacts with KCNE2; form a heterooligomer complex that targets to the membrane raft and leading to currents with an apparently instantaneous activation, a rapid deactivation process and a linear current-voltage relationship and decreases the amplitude of the outward current. Interacts with KCNE3; four KCNE3 molecules are bound to one KCNQ1 tetramer (4:4 KCNQ1:KCNE3 stoichiometry); alters membrane raft localization; affects KCNQ1 structure and gating properties. Interacts with KCNE4; impairs KCNQ1 localization in lipid rafts and inhibits voltage-gated potassium channel activity. Interacts with KCNE5; impairs KCNQ1 localization in lipid rafts and only conducts current upon strong and continued depolarization.

It localises to the cell membrane. It is found in the cytoplasmic vesicle membrane. Its subcellular location is the membrane raft. The protein resides in the endoplasmic reticulum. The protein localises to the basolateral cell membrane. The catalysed reaction is K(+)(in) = K(+)(out). Its activity is regulated as follows. PIP2 molecule is essential to activate KCNQ channels by inducing the coupling of the voltage-sensing domain (VSD) and the pore-forming domain (PD). Upon channel activation, PIP2 disrupts the VSD-calmodulin/CALM interactions, causing the release of CALM from the VSD which triggers the opening of the gate. Calcium potentiates KCNQ1 channel current through calcium-bound CALM. Calcium-bound CALM competes with PIP2 to stabilize the channel open state. Pore-forming subunit of the voltage-gated potassium (Kv) channel involved in the regulation of cardiomyocyte excitability and important in normal development and functions of myocardium, inner ear, stomach and colon. Associates with KCNE beta subunits that modulates current kinetics. Induces a voltage-dependent by rapidly activating and slowly deactivating potassium-selective outward current. Also promotes a delayed voltage activated potassium current showing outward rectification characteristic. During beta-adrenergic receptor stimulation participates in cardiac repolarization by associating with KCNE1 to form the I(Ks) cardiac potassium current that increases the amplitude and slows down the activation kinetics of outward potassium current I(Ks). When associated with KCNE3, forms the potassium channel that is important for cyclic AMP-stimulated intestinal secretion of chloride ions. When associated with KCNE2, forms a heterooligomer complex leading to currents with an apparently instantaneous activation, a rapid deactivation process and a linear current-voltage relationship and decreases the amplitude of the outward current. When associated with KCNE4, inhibits voltage-gated potassium channel activity. When associated with KCNE5, this complex only conducts current upon strong and continued depolarization. In Xenopus laevis (African clawed frog), this protein is Potassium voltage-gated channel subfamily KQT member 1.